The sequence spans 232 residues: 5'-methylthioadenosine/S-adenosylhomocysteine nucleosidase (232 aa).

The active-site Proton acceptor is Glu12. Residues Gly78, Val152, and 173 to 174 (ME) each bind substrate. Asp197 (proton donor) is an active-site residue.

Belongs to the PNP/UDP phosphorylase family. MtnN subfamily. As to quaternary structure, homodimer.

It carries out the reaction S-adenosyl-L-homocysteine + H2O = S-(5-deoxy-D-ribos-5-yl)-L-homocysteine + adenine. The catalysed reaction is S-methyl-5'-thioadenosine + H2O = 5-(methylsulfanyl)-D-ribose + adenine. It catalyses the reaction 5'-deoxyadenosine + H2O = 5-deoxy-D-ribose + adenine. The protein operates within amino-acid biosynthesis; L-methionine biosynthesis via salvage pathway; S-methyl-5-thio-alpha-D-ribose 1-phosphate from S-methyl-5'-thioadenosine (hydrolase route): step 1/2. Functionally, catalyzes the irreversible cleavage of the glycosidic bond in both 5'-methylthioadenosine (MTA) and S-adenosylhomocysteine (SAH/AdoHcy) to adenine and the corresponding thioribose, 5'-methylthioribose and S-ribosylhomocysteine, respectively. Also cleaves 5'-deoxyadenosine, a toxic by-product of radical S-adenosylmethionine (SAM) enzymes, into 5-deoxyribose and adenine. Thus, is required for in vivo function of the radical SAM enzymes biotin synthase and lipoic acid synthase, that are inhibited by 5'-deoxyadenosine accumulation. The polypeptide is 5'-methylthioadenosine/S-adenosylhomocysteine nucleosidase (Buchnera aphidicola subsp. Acyrthosiphon pisum (strain APS) (Acyrthosiphon pisum symbiotic bacterium)).